We begin with the raw amino-acid sequence, 269 residues long: Eukaryotic translation initiation factor 3 subunit G-1 (269 aa).

Positions A188 to P266 constitute an RRM domain.

This sequence belongs to the eIF-3 subunit G family. As to quaternary structure, component of the eukaryotic translation initiation factor 3 (eIF-3) complex. The eIF-3 complex interacts with pix.

It localises to the cytoplasm. Its function is as follows. RNA-binding component of the eukaryotic translation initiation factor 3 (eIF-3) complex, which is involved in protein synthesis of a specialized repertoire of mRNAs and, together with other initiation factors, stimulates binding of mRNA and methionyl-tRNAi to the 40S ribosome. The eIF-3 complex specifically targets and initiates translation of a subset of mRNAs involved in cell proliferation. This subunit can bind 18S rRNA. This Drosophila willistoni (Fruit fly) protein is Eukaryotic translation initiation factor 3 subunit G-1.